The following is an 89-amino-acid chain: Small ribosomal subunit protein uS17 (89 aa).

The protein belongs to the universal ribosomal protein uS17 family. Part of the 30S ribosomal subunit.

In terms of biological role, one of the primary rRNA binding proteins, it binds specifically to the 5'-end of 16S ribosomal RNA. In Leptospira borgpetersenii serovar Hardjo-bovis (strain JB197), this protein is Small ribosomal subunit protein uS17.